Here is a 291-residue protein sequence, read N- to C-terminus: MAITAAQVKELRDKTSVGMMDAKKALVEADGDLDKAIDLLREKGMAKAAKKGDRVAAEGMTAVAVKGNRAAIIELNSETDFVAGNAEFNELLNAVANTIVEFAPADVEAALALEVQEGQTLNDKIIGTTQITGEKITLRRFSVVEKSDSENFGSYSHLAGSISALVVVDGASEEAAKDIAMHVAAIAPQFVSDDQVPADVIAKEKEVQLASEDLNGKPDNIKERMVEGRIKKFLAEISLLDQPFVKNGDQTVAQFISSQNGSVKSFVRYQVGDGIEKQVTDLAEEVAKQLG.

An involved in Mg(2+) ion dislocation from EF-Tu region spans residues 79–82 (TDFV).

This sequence belongs to the EF-Ts family.

The protein resides in the cytoplasm. Its function is as follows. Associates with the EF-Tu.GDP complex and induces the exchange of GDP to GTP. It remains bound to the aminoacyl-tRNA.EF-Tu.GTP complex up to the GTP hydrolysis stage on the ribosome. This chain is Elongation factor Ts, found in Leuconostoc mesenteroides subsp. mesenteroides (strain ATCC 8293 / DSM 20343 / BCRC 11652 / CCM 1803 / JCM 6124 / NCDO 523 / NBRC 100496 / NCIMB 8023 / NCTC 12954 / NRRL B-1118 / 37Y).